The following is a 228-amino-acid chain: Heptaprenylglyceryl phosphate synthase (228 aa).

Residue Lys12 participates in sn-glycerol 1-phosphate binding. Asp14 and Ser40 together coordinate Mg(2+). Residues 159-164 (YLEYSG), Gly189, and 209-210 (GN) contribute to the sn-glycerol 1-phosphate site.

The protein belongs to the GGGP/HepGP synthase family. Group I subfamily. In terms of assembly, homodimer. Mg(2+) serves as cofactor.

The enzyme catalyses sn-glycerol 1-phosphate + all-trans-heptaprenyl diphosphate = 3-heptaprenyl-sn-glycero-1-phosphate + diphosphate. Its pathway is membrane lipid metabolism; glycerophospholipid metabolism. Its function is as follows. Prenyltransferase that catalyzes in vivo the transfer of the heptaprenyl moiety of heptaprenyl pyrophosphate (HepPP; 35 carbon atoms) to the C3 hydroxyl of sn-glycerol-1-phosphate (G1P), producing heptaprenylglyceryl phosphate (HepGP). This reaction is an ether-bond-formation step in the biosynthesis of archaea-type G1P-based membrane lipids found in Bacillales. This is Heptaprenylglyceryl phosphate synthase from Bacillus licheniformis (strain ATCC 14580 / DSM 13 / JCM 2505 / CCUG 7422 / NBRC 12200 / NCIMB 9375 / NCTC 10341 / NRRL NRS-1264 / Gibson 46).